We begin with the raw amino-acid sequence, 180 residues long: Large ribosomal subunit protein uL5 (180 aa).

The protein belongs to the universal ribosomal protein uL5 family. As to quaternary structure, part of the 50S ribosomal subunit; part of the 5S rRNA/L5/L18/L25 subcomplex. Contacts the 5S rRNA and the P site tRNA. Forms a bridge to the 30S subunit in the 70S ribosome.

In terms of biological role, this is one of the proteins that bind and probably mediate the attachment of the 5S RNA into the large ribosomal subunit, where it forms part of the central protuberance. In the 70S ribosome it contacts protein S13 of the 30S subunit (bridge B1b), connecting the 2 subunits; this bridge is implicated in subunit movement. Contacts the P site tRNA; the 5S rRNA and some of its associated proteins might help stabilize positioning of ribosome-bound tRNAs. This Clostridium botulinum (strain Loch Maree / Type A3) protein is Large ribosomal subunit protein uL5.